Reading from the N-terminus, the 184-residue chain is Putative manganese efflux pump MntP (184 aa).

A run of 5 helical transmembrane segments spans residues 39-59 (IFGV…LSFV), 65-85 (IDHF…ILEA), 102-122 (LALG…TFSF), 132-152 (LIIG…GKIL), and 161-181 (LVLG…THLV).

Belongs to the MntP (TC 9.B.29) family.

It localises to the cell inner membrane. Functionally, probably functions as a manganese efflux pump. The sequence is that of Putative manganese efflux pump MntP from Campylobacter curvus (strain 525.92).